A 218-amino-acid chain; its full sequence is MKLILLGAPGAGKGTQAAFICQKYGIPQISTGDMLRAAVKAGTPLGQQAKAVMDAGQLVSDDLIINLVKERIAQADCANGFLFDGFPRTIPQADAMKAAGVKLDYVLEIDVPFDAIIERMSGRRSHPASGRTYHVKFNPPKVEGQDDVTGEPLVQREDDKEETVKKRLDVYSSQTRPLVDYYRAWAEKEAAAAPKYRAISGLGSVEDITQRALAALAE.

10 to 15 is a binding site for ATP; the sequence is GAGKGT. The segment at 30–59 is NMP; the sequence is STGDMLRAAVKAGTPLGQQAKAVMDAGQLV. AMP contacts are provided by residues T31, R36, 57 to 59, 85 to 88, and Q92; these read QLV and GFPR. Residues 122-159 form an LID region; it reads GRRSHPASGRTYHVKFNPPKVEGQDDVTGEPLVQREDD. ATP-binding positions include R123 and 132 to 133; that span reads TY. Positions 127–151 are disordered; the sequence is PASGRTYHVKFNPPKVEGQDDVTGE. Residues R156 and R167 each contribute to the AMP site. G203 serves as a coordination point for ATP.

The protein belongs to the adenylate kinase family. In terms of assembly, monomer.

The protein resides in the cytoplasm. It carries out the reaction AMP + ATP = 2 ADP. The protein operates within purine metabolism; AMP biosynthesis via salvage pathway; AMP from ADP: step 1/1. Catalyzes the reversible transfer of the terminal phosphate group between ATP and AMP. Plays an important role in cellular energy homeostasis and in adenine nucleotide metabolism. This chain is Adenylate kinase, found in Delftia acidovorans (strain DSM 14801 / SPH-1).